Reading from the N-terminus, the 114-residue chain is T cell receptor beta variable 3-1 (114 aa).

Positions 1 to 21 (MGCRLLCCVVFCLLQAGPLDT) are cleaved as a signal peptide. In terms of domain architecture, Ig-like spans 22–114 (AVSQTPKYLV…SAVYFCASSQ (93 aa)). Cysteine 42 and cysteine 110 are disulfide-bonded. An N-linked (GlcNAc...) asparagine glycan is attached at asparagine 76.

As to quaternary structure, alpha-beta TR is a heterodimer composed of an alpha and beta chain; disulfide-linked. The alpha-beta TR is associated with the transmembrane signaling CD3 coreceptor proteins to form the TR-CD3 (TcR or TCR). The assembly of alpha-beta TR heterodimers with CD3 occurs in the endoplasmic reticulum where a single alpha-beta TR heterodimer associates with one CD3D-CD3E heterodimer, one CD3G-CD3E heterodimer and one CD247 homodimer forming a stable octameric structure. CD3D-CD3E and CD3G-CD3E heterodimers preferentially associate with TR alpha and TR beta chains, respectively. The association of the CD247 homodimer is the last step of TcR assembly in the endoplasmic reticulum and is required for transport to the cell surface.

The protein resides in the cell membrane. Functionally, v region of the variable domain of T cell receptor (TR) beta chain that participates in the antigen recognition. Alpha-beta T cell receptors are antigen specific receptors which are essential to the immune response and are present on the cell surface of T lymphocytes. Recognize peptide-major histocompatibility (MH) (pMH) complexes that are displayed by antigen presenting cells (APC), a prerequisite for efficient T cell adaptive immunity against pathogens. Binding of alpha-beta TR to pMH complex initiates TR-CD3 clustering on the cell surface and intracellular activation of LCK that phosphorylates the ITAM motifs of CD3G, CD3D, CD3E and CD247 enabling the recruitment of ZAP70. In turn ZAP70 phosphorylates LAT, which recruits numerous signaling molecules to form the LAT signalosome. The LAT signalosome propagates signal branching to three major signaling pathways, the calcium, the mitogen-activated protein kinase (MAPK) kinase and the nuclear factor NF-kappa-B (NF-kB) pathways, leading to the mobilization of transcription factors that are critical for gene expression and essential for T cell growth and differentiation. The T cell repertoire is generated in the thymus, by V-(D)-J rearrangement. This repertoire is then shaped by intrathymic selection events to generate a peripheral T cell pool of self-MH restricted, non-autoaggressive T cells. Post-thymic interaction of alpha-beta TR with the pMH complexes shapes TR structural and functional avidity. The protein is T cell receptor beta variable 3-1 of Homo sapiens (Human).